The sequence spans 580 residues: Lysine--tRNA ligase (580 aa).

The 'HIGH' region signature appears at 43–51; sequence PSGPIHLGN. The disordered stretch occupies residues 178–209; it reads KAPAKKSQKPLDEAELEAAEGSGAAAEDDGSS. Residues 196-209 show a composition bias toward low complexity; the sequence is AEGSGAAAEDDGSS. The 'KMSKS' region signature appears at 325 to 329; the sequence is KMSSS.

Belongs to the class-I aminoacyl-tRNA synthetase family.

Its subcellular location is the cytoplasm. It catalyses the reaction tRNA(Lys) + L-lysine + ATP = L-lysyl-tRNA(Lys) + AMP + diphosphate. This Streptomyces coelicolor (strain ATCC BAA-471 / A3(2) / M145) protein is Lysine--tRNA ligase (lysS).